Reading from the N-terminus, the 1515-residue chain is Apolipophorin (1515 aa).

The region spanning 952 to 1118 (LRGVVVNGQH…NSYRLASSCP (167 aa)) is the VWFD domain. Cysteine 976 and cysteine 1117 are oxidised to a cystine. An N-linked (GlcNAc...) asparagine glycan is attached at asparagine 988.

As to expression, hemolymph.

The protein resides in the secreted. Functionally, mediates transport for various types of lipids in hemolymph. Acts by forming lipoprotein particles that bind lipoproteins and lipids. Binds the A.niger cell wall component alpha-1,3-glucan, a fungal pathogen-associated molecular pattern (PAMP) that activates the host immune response. The polypeptide is Apolipophorin (Galleria mellonella (Greater wax moth)).